The sequence spans 134 residues: Mite allergen Blo t 5 (134 aa).

Residues M1–A17 form the signal peptide. Residues Q18 to L113 adopt a coiled-coil conformation.

This sequence belongs to the mite group 5 allergen family. As to quaternary structure, may exist as homodimer and homotrimer. In terms of tissue distribution, midgut and hindgut contents as well as fecal pellets (at protein level).

The sequence is that of Mite allergen Blo t 5 (BLOT5) from Blomia tropicalis (Mite).